The sequence spans 863 residues: Probable beta-glucosidase A (863 aa).

An N-terminal signal peptide occupies residues 1-19; sequence MKLGWLEAAALTAASVASA. N-linked (GlcNAc...) asparagine glycosylation is found at asparagine 65, asparagine 214, and asparagine 255. Aspartate 283 is a catalytic residue. Asparagine 318, asparagine 325, asparagine 357, asparagine 493, asparagine 526, asparagine 545, asparagine 567, asparagine 664, and asparagine 715 each carry an N-linked (GlcNAc...) asparagine glycan. Residues 720-754 form a disordered region; sequence KESSGDPNYGWDDEDYIPEGAKDGSPQDVLPSGGG.

Belongs to the glycosyl hydrolase 3 family.

Its subcellular location is the secreted. The catalysed reaction is Hydrolysis of terminal, non-reducing beta-D-glucosyl residues with release of beta-D-glucose.. It functions in the pathway glycan metabolism; cellulose degradation. In terms of biological role, beta-glucosidases are one of a number of cellulolytic enzymes involved in the degradation of cellulosic biomass. Catalyzes the last step releasing glucose from the inhibitory cellobiose. In Emericella nidulans (strain FGSC A4 / ATCC 38163 / CBS 112.46 / NRRL 194 / M139) (Aspergillus nidulans), this protein is Probable beta-glucosidase A (bglA).